The following is a 292-amino-acid chain: ATP synthase gamma chain (292 aa).

The protein belongs to the ATPase gamma chain family. F-type ATPases have 2 components, CF(1) - the catalytic core - and CF(0) - the membrane proton channel. CF(1) has five subunits: alpha(3), beta(3), gamma(1), delta(1), epsilon(1). CF(0) has three main subunits: a, b and c.

It is found in the cell membrane. Produces ATP from ADP in the presence of a proton gradient across the membrane. The gamma chain is believed to be important in regulating ATPase activity and the flow of protons through the CF(0) complex. The protein is ATP synthase gamma chain of Streptococcus thermophilus (strain CNRZ 1066).